The chain runs to 251 residues: MKLYSFQEHLLEFKIRLLRIFTAFIIIFAICYYFSDYIYSFLLEPLAKLSGDTVRNIIYTGLTEAFFTYIKLSAFTAFTIIIPIIALECYLFISPGLYRHEKKIIAFILFMSPILFWCGSIFVFYFVMPKAWNFFLSFEKRDMIVPIILEARISEYLNLVIHLIIAFGIAFQLPIVIIVLNILKIVKTQTLKKKRRIAVVINFIIAGILTPPDILSQFALAIPLLLLYETSIIICNFIETPRTLNVKYQMD.

6 consecutive transmembrane segments (helical) span residues 23–43 (AFII…SFLL), 73–93 (SAFT…YLFI), 104–124 (IIAF…IFVF), 159–179 (LVIH…VIIV), 197–217 (IAVV…ILSQ), and 218–238 (FALA…CNFI).

It belongs to the TatC family. As to quaternary structure, the Tat system comprises two distinct complexes: a TatABC complex, containing multiple copies of TatA, TatB and TatC subunits, and a separate TatA complex, containing only TatA subunits. Substrates initially bind to the TatABC complex, which probably triggers association of the separate TatA complex to form the active translocon.

The protein resides in the cell inner membrane. In terms of biological role, part of the twin-arginine translocation (Tat) system that transports large folded proteins containing a characteristic twin-arginine motif in their signal peptide across membranes. Together with TatB, TatC is part of a receptor directly interacting with Tat signal peptides. This chain is Sec-independent protein translocase protein TatC, found in Rickettsia prowazekii (strain Madrid E).